Here is a 306-residue protein sequence, read N- to C-terminus: Lipoyl synthase (306 aa).

Residues Cys-41, Cys-46, Cys-52, Cys-68, Cys-72, Cys-75, and Ser-281 each coordinate [4Fe-4S] cluster. The Radical SAM core domain maps to 54–270 (GARRTATFMI…RKVAMDKGFK (217 aa)). Residues 283 to 306 (HADEQVNEAAKEKHRLGEEKLQQN) form a disordered region.

This sequence belongs to the radical SAM superfamily. Lipoyl synthase family. It depends on [4Fe-4S] cluster as a cofactor.

It is found in the cytoplasm. It carries out the reaction [[Fe-S] cluster scaffold protein carrying a second [4Fe-4S](2+) cluster] + N(6)-octanoyl-L-lysyl-[protein] + 2 oxidized [2Fe-2S]-[ferredoxin] + 2 S-adenosyl-L-methionine + 4 H(+) = [[Fe-S] cluster scaffold protein] + N(6)-[(R)-dihydrolipoyl]-L-lysyl-[protein] + 4 Fe(3+) + 2 hydrogen sulfide + 2 5'-deoxyadenosine + 2 L-methionine + 2 reduced [2Fe-2S]-[ferredoxin]. The protein operates within protein modification; protein lipoylation via endogenous pathway; protein N(6)-(lipoyl)lysine from octanoyl-[acyl-carrier-protein]. Catalyzes the radical-mediated insertion of two sulfur atoms into the C-6 and C-8 positions of the octanoyl moiety bound to the lipoyl domains of lipoate-dependent enzymes, thereby converting the octanoylated domains into lipoylated derivatives. In Staphylococcus haemolyticus (strain JCSC1435), this protein is Lipoyl synthase.